Consider the following 388-residue polypeptide: 4-hydroxy-3-methylbut-2-en-1-yl diphosphate synthase (flavodoxin) (388 aa).

Residues cysteine 281, cysteine 284, cysteine 316, and glutamate 323 each contribute to the [4Fe-4S] cluster site.

Belongs to the IspG family. It depends on [4Fe-4S] cluster as a cofactor.

It catalyses the reaction (2E)-4-hydroxy-3-methylbut-2-enyl diphosphate + oxidized [flavodoxin] + H2O + 2 H(+) = 2-C-methyl-D-erythritol 2,4-cyclic diphosphate + reduced [flavodoxin]. It functions in the pathway isoprenoid biosynthesis; isopentenyl diphosphate biosynthesis via DXP pathway; isopentenyl diphosphate from 1-deoxy-D-xylulose 5-phosphate: step 5/6. In terms of biological role, converts 2C-methyl-D-erythritol 2,4-cyclodiphosphate (ME-2,4cPP) into 1-hydroxy-2-methyl-2-(E)-butenyl 4-diphosphate. This is 4-hydroxy-3-methylbut-2-en-1-yl diphosphate synthase (flavodoxin) from Paenarthrobacter aurescens (strain TC1).